Consider the following 573-residue polypeptide: Poly(ribitol-phosphate) beta-N-acetylglucosaminyltransferase TarS (573 aa).

UDP-N-acetyl-alpha-D-glucosamine-binding positions include Pro9, Asp41, Asn68, Arg76, 92 to 94 (DSD), Arg127, and Glu178. Asp94 is a Mn(2+) binding site. The Proton acceptor role is filled by Asp179. UDP-N-acetyl-alpha-D-glucosamine is bound by residues Arg207 and 211 to 213 (HMS).

This sequence belongs to the glycosyltransferase 2 family. In terms of assembly, homotrimer. Mn(2+) is required as a cofactor.

The catalysed reaction is 4-O-[(D-ribitylphospho)(n)-di{(2R)-glycerylphospho}]-N-acetyl-beta-D-mannosaminyl-(1-&gt;4)-N-acetyl-alpha-D-glucosaminyl di-trans,octa-cis-undecaprenyl diphosphate + n UDP-N-acetyl-alpha-D-glucosamine = 4-O-([2-N-acetyl-beta-D-glucosaminyl-1-D-ribitylphospho](n)-di{[2R]-1-glycerylphospho})-N-acetyl-beta-D-mannosaminyl-(1-&gt;4)-N-acetyl-alpha-D-glucosaminyl di-trans,octa-cis-undecaprenyl diphosphate + n UDP + n H(+). It participates in cell wall biogenesis; poly(ribitol phosphate) teichoic acid biosynthesis. Attaches beta-O-GlcNAc (beta-O-N-acetyl-D-glucosamine) residues to the C4 position of poly(RboP)-wall teichoic acids (WTAs). Prefers UDP-GlcNAc as a donor substrate and is specific for poly(ribitol phosphate) WTAs. Can also use UDP-Glc and UDP-GalNAc, but not UDP-galactose or UDP-glucuronic acid. Mediates beta-lactam resistance in methicillin resistant Staphylococcus aureus (MRSA) strains. In Staphylococcus aureus (strain MW2), this protein is Poly(ribitol-phosphate) beta-N-acetylglucosaminyltransferase TarS.